The primary structure comprises 242 residues: Guanylate kinase (242 aa).

Residues 22 to 200 (GLLIVMTGAS…AVRELQAVQR (179 aa)) enclose the Guanylate kinase-like domain. An ATP-binding site is contributed by 29–36 (GASGVGKG).

This sequence belongs to the guanylate kinase family.

The protein localises to the cytoplasm. The enzyme catalyses GMP + ATP = GDP + ADP. Functionally, essential for recycling GMP and indirectly, cGMP. In Deinococcus geothermalis (strain DSM 11300 / CIP 105573 / AG-3a), this protein is Guanylate kinase.